A 140-amino-acid polypeptide reads, in one-letter code: 3-hydroxyacyl-[acyl-carrier-protein] dehydratase FabZ (140 aa).

H46 is a catalytic residue.

Belongs to the thioester dehydratase family. FabZ subfamily.

The protein resides in the cytoplasm. The enzyme catalyses a (3R)-hydroxyacyl-[ACP] = a (2E)-enoyl-[ACP] + H2O. In terms of biological role, involved in unsaturated fatty acids biosynthesis. Catalyzes the dehydration of short chain beta-hydroxyacyl-ACPs and long chain saturated and unsaturated beta-hydroxyacyl-ACPs. In Pseudothermotoga lettingae (strain ATCC BAA-301 / DSM 14385 / NBRC 107922 / TMO) (Thermotoga lettingae), this protein is 3-hydroxyacyl-[acyl-carrier-protein] dehydratase FabZ.